The chain runs to 55 residues: Large ribosomal subunit protein bL33 (55 aa).

It belongs to the bacterial ribosomal protein bL33 family.

This is Large ribosomal subunit protein bL33 from Buchnera aphidicola subsp. Schizaphis graminum (strain Sg).